The chain runs to 154 residues: Ribosome maturation factor RimP (154 aa).

Belongs to the RimP family.

It localises to the cytoplasm. In terms of biological role, required for maturation of 30S ribosomal subunits. This is Ribosome maturation factor RimP from Prochlorococcus marinus (strain MIT 9303).